We begin with the raw amino-acid sequence, 390 residues long: tRNA-specific 2-thiouridylase MnmA (390 aa).

ATP-binding positions include 36–43 (GMSGGVDS) and Met62. Residues 122 to 124 (NPD) are interaction with target base in tRNA. The active-site Nucleophile is the Cys127. The cysteines at positions 127 and 223 are disulfide-linked. Gly151 is a binding site for ATP. The interval 173–175 (KDQ) is interaction with tRNA. Cys223 functions as the Cysteine persulfide intermediate in the catalytic mechanism. The segment at 335 to 336 (RY) is interaction with tRNA.

It belongs to the MnmA/TRMU family.

The protein localises to the cytoplasm. It catalyses the reaction S-sulfanyl-L-cysteinyl-[protein] + uridine(34) in tRNA + AH2 + ATP = 2-thiouridine(34) in tRNA + L-cysteinyl-[protein] + A + AMP + diphosphate + H(+). Its function is as follows. Catalyzes the 2-thiolation of uridine at the wobble position (U34) of tRNA, leading to the formation of s(2)U34. This chain is tRNA-specific 2-thiouridylase MnmA, found in Marinomonas sp. (strain MWYL1).